The chain runs to 24 residues: Cytochrome c oxidase subunit 5A-2, mitochondrial (24 aa).

The protein belongs to the cytochrome c oxidase subunit 5A family. In terms of assembly, component of the cytochrome c oxidase (complex IV, CIV), a multisubunit enzyme composed of 14 subunits. The complex is composed of a catalytic core of 3 subunits MT-CO1, MT-CO2 and MT-CO3, encoded in the mitochondrial DNA, and 11 supernumerary subunits COX4I, COX5A, COX5B, COX6A, COX6B, COX6C, COX7A, COX7B, COX7C, COX8 and NDUFA4, which are encoded in the nuclear genome. The complex exists as a monomer or a dimer and forms supercomplexes (SCs) in the inner mitochondrial membrane with NADH-ubiquinone oxidoreductase (complex I, CI) and ubiquinol-cytochrome c oxidoreductase (cytochrome b-c1 complex, complex III, CIII), resulting in different assemblies (supercomplex SCI(1)III(2)IV(1) and megacomplex MCI(2)III(2)IV(2)).

Its subcellular location is the mitochondrion inner membrane. The protein operates within energy metabolism; oxidative phosphorylation. Functionally, component of the cytochrome c oxidase, the last enzyme in the mitochondrial electron transport chain which drives oxidative phosphorylation. The respiratory chain contains 3 multisubunit complexes succinate dehydrogenase (complex II, CII), ubiquinol-cytochrome c oxidoreductase (cytochrome b-c1 complex, complex III, CIII) and cytochrome c oxidase (complex IV, CIV), that cooperate to transfer electrons derived from NADH and succinate to molecular oxygen, creating an electrochemical gradient over the inner membrane that drives transmembrane transport and the ATP synthase. Cytochrome c oxidase is the component of the respiratory chain that catalyzes the reduction of oxygen to water. Electrons originating from reduced cytochrome c in the intermembrane space (IMS) are transferred via the dinuclear copper A center (CU(A)) of subunit 2 and heme A of subunit 1 to the active site in subunit 1, a binuclear center (BNC) formed by heme A3 and copper B (CU(B)). The BNC reduces molecular oxygen to 2 water molecules using 4 electrons from cytochrome c in the IMS and 4 protons from the mitochondrial matrix. The polypeptide is Cytochrome c oxidase subunit 5A-2, mitochondrial (Thunnus obesus (Bigeye tuna)).